Consider the following 54-residue polypeptide: Large ribosomal subunit protein bL33C (54 aa).

The protein belongs to the bacterial ribosomal protein bL33 family.

The protein is Large ribosomal subunit protein bL33C (rpmG3) of Streptomyces coelicolor (strain ATCC BAA-471 / A3(2) / M145).